The following is a 74-amino-acid chain: Putative membrane protein insertion efficiency factor (74 aa).

The protein belongs to the UPF0161 family.

The protein resides in the cell inner membrane. Could be involved in insertion of integral membrane proteins into the membrane. This Leptospira interrogans serogroup Icterohaemorrhagiae serovar copenhageni (strain Fiocruz L1-130) protein is Putative membrane protein insertion efficiency factor.